The sequence spans 347 residues: Microneme protein 21 (347 aa).

It localises to the cytoplasmic vesicle. The protein resides in the secretory vesicle. The protein localises to the microneme. It is found in the secreted. In Toxoplasma gondii, this protein is Microneme protein 21.